Consider the following 115-residue polypeptide: DNA-directed RNA polymerase II subunit RPB11-b2 (115 aa).

The protein belongs to the archaeal Rpo11/eukaryotic RPB11/RPC19 RNA polymerase subunit family. In terms of assembly, component of the RNA polymerase II (Pol II) complex consisting of 12 subunits.

It is found in the nucleus. In terms of biological role, DNA-dependent RNA polymerase catalyzes the transcription of DNA into RNA using the four ribonucleoside triphosphates as substrates. Component of RNA polymerase II which synthesizes mRNA precursors and many functional non-coding RNAs. Pol II is the central component of the basal RNA polymerase II transcription machinery. It is composed of mobile elements that move relative to each other. RPB11 is part of the core element with the central large cleft. The chain is DNA-directed RNA polymerase II subunit RPB11-b2 (POLR2J3) from Homo sapiens (Human).